We begin with the raw amino-acid sequence, 524 residues long: Serine/threonine-protein phosphatase 2A 56 kDa regulatory subunit gamma isoform (524 aa).

An N-acetylmethionine modification is found at Met-1. Residues 472 to 489 (RKTVSDEARQAQKDPKKE) carry the Nuclear localization signal motif. Positions 476-524 (SDEARQAQKDPKKERPLARRKSELPQDPHTKKALEAHCRADELVPQDGR) are disordered.

This sequence belongs to the phosphatase 2A regulatory subunit B56 family. In terms of assembly, PP2A consists of a common heterodimeric core enzyme, composed of PPP2CA a 36 kDa catalytic subunit (subunit C) and PPP2R1A a 65 kDa constant regulatory subunit (PR65 or subunit A), that associates with a variety of regulatory subunits. Proteins that associate with the core dimer include three families of regulatory subunits B (the R2/B/PR55/B55, R3/B''/PR72/PR130/PR59 and R5/B'/B56 families), the 48 kDa variable regulatory subunit, viral proteins, and cell signaling molecules. Interacts with SGO1. Interacts with SGO1; the interaction is direct. May interact with TP53. Interacts with IER3 and/or ERK kinases; regulates ERK dephosphorylation Interacts with CIP2A; this interaction stabilizes CIP2A. As to expression, highly expressed in testis, heart and spleen. Also found in brain and skeletal muscle.

It is found in the nucleus. The protein localises to the chromosome. The protein resides in the centromere. Functionally, the B regulatory subunit might modulate substrate selectivity and catalytic activity, and might also direct the localization of the catalytic enzyme to a particular subcellular compartment. The PP2A-PPP2R5C holoenzyme may activate TP53 and play a role in DNA damage-induced inhibition of cell proliferation. PP2A-PPP2R5C may also regulate the ERK signaling pathway through ERK dephosphorylation. In Oryctolagus cuniculus (Rabbit), this protein is Serine/threonine-protein phosphatase 2A 56 kDa regulatory subunit gamma isoform (PPP2R5C).